We begin with the raw amino-acid sequence, 488 residues long: Glutamyl-tRNA(Gln) amidotransferase subunit A (488 aa).

Active-site charge relay system residues include Lys-80 and Ser-155. The Acyl-ester intermediate role is filled by Ser-179.

The protein belongs to the amidase family. GatA subfamily. As to quaternary structure, heterotrimer of A, B and C subunits.

It carries out the reaction L-glutamyl-tRNA(Gln) + L-glutamine + ATP + H2O = L-glutaminyl-tRNA(Gln) + L-glutamate + ADP + phosphate + H(+). Functionally, allows the formation of correctly charged Gln-tRNA(Gln) through the transamidation of misacylated Glu-tRNA(Gln) in organisms which lack glutaminyl-tRNA synthetase. The reaction takes place in the presence of glutamine and ATP through an activated gamma-phospho-Glu-tRNA(Gln). This Chloroflexus aggregans (strain MD-66 / DSM 9485) protein is Glutamyl-tRNA(Gln) amidotransferase subunit A.